The chain runs to 109 residues: MLDKTLRMNYLFDFYQSLLTEKQRKYMSLYYLDDFSLGEIAEEFDVSRQAVYDNIKRTEAMLEEYEEKLSLLAKFEKRSEILQQLKEAVDKQATSEELMALLESLDTLE.

This sequence belongs to the UPF0122 family.

Might take part in the signal recognition particle (SRP) pathway. This is inferred from the conservation of its genetic proximity to ftsY/ffh. May be a regulatory protein. This chain is UPF0122 protein BH2485, found in Halalkalibacterium halodurans (strain ATCC BAA-125 / DSM 18197 / FERM 7344 / JCM 9153 / C-125) (Bacillus halodurans).